Reading from the N-terminus, the 297-residue chain is Phosphatidylserine decarboxylase proenzyme (297 aa).

Residues D100, H157, and S263 each act as charge relay system; for autoendoproteolytic cleavage activity in the active site. The active-site Schiff-base intermediate with substrate; via pyruvic acid; for decarboxylase activity is S263. Position 263 is a pyruvic acid (Ser); by autocatalysis (S263).

Belongs to the phosphatidylserine decarboxylase family. PSD-B subfamily. Prokaryotic type I sub-subfamily. Heterodimer of a large membrane-associated beta subunit and a small pyruvoyl-containing alpha subunit. Requires pyruvate as cofactor. Post-translationally, is synthesized initially as an inactive proenzyme. Formation of the active enzyme involves a self-maturation process in which the active site pyruvoyl group is generated from an internal serine residue via an autocatalytic post-translational modification. Two non-identical subunits are generated from the proenzyme in this reaction, and the pyruvate is formed at the N-terminus of the alpha chain, which is derived from the carboxyl end of the proenzyme. The autoendoproteolytic cleavage occurs by a canonical serine protease mechanism, in which the side chain hydroxyl group of the serine supplies its oxygen atom to form the C-terminus of the beta chain, while the remainder of the serine residue undergoes an oxidative deamination to produce ammonia and the pyruvoyl prosthetic group on the alpha chain. During this reaction, the Ser that is part of the protease active site of the proenzyme becomes the pyruvoyl prosthetic group, which constitutes an essential element of the active site of the mature decarboxylase.

Its subcellular location is the cell membrane. The enzyme catalyses a 1,2-diacyl-sn-glycero-3-phospho-L-serine + H(+) = a 1,2-diacyl-sn-glycero-3-phosphoethanolamine + CO2. The protein operates within phospholipid metabolism; phosphatidylethanolamine biosynthesis; phosphatidylethanolamine from CDP-diacylglycerol: step 2/2. Its function is as follows. Catalyzes the formation of phosphatidylethanolamine (PtdEtn) from phosphatidylserine (PtdSer). The protein is Phosphatidylserine decarboxylase proenzyme of Glaesserella parasuis serovar 5 (strain SH0165) (Haemophilus parasuis).